A 128-amino-acid chain; its full sequence is Small ribosomal subunit protein eS6 (128 aa).

Belongs to the eukaryotic ribosomal protein eS6 family.

This chain is Small ribosomal subunit protein eS6, found in Methanobrevibacter smithii (strain ATCC 35061 / DSM 861 / OCM 144 / PS).